Reading from the N-terminus, the 326-residue chain is Undecaprenyl-phosphate 4-deoxy-4-formamido-L-arabinose transferase (326 aa).

2 helical membrane-spanning segments follow: residues 235–255 and 270–290; these read MLSV…LLLI and VFML…GMGL.

Belongs to the glycosyltransferase 2 family.

It is found in the cell inner membrane. It carries out the reaction UDP-4-deoxy-4-formamido-beta-L-arabinose + di-trans,octa-cis-undecaprenyl phosphate = 4-deoxy-4-formamido-alpha-L-arabinopyranosyl di-trans,octa-cis-undecaprenyl phosphate + UDP. It participates in glycolipid biosynthesis; 4-amino-4-deoxy-alpha-L-arabinose undecaprenyl phosphate biosynthesis; 4-amino-4-deoxy-alpha-L-arabinose undecaprenyl phosphate from UDP-4-deoxy-4-formamido-beta-L-arabinose and undecaprenyl phosphate: step 1/2. The protein operates within bacterial outer membrane biogenesis; lipopolysaccharide biosynthesis. Functionally, catalyzes the transfer of 4-deoxy-4-formamido-L-arabinose from UDP to undecaprenyl phosphate. The modified arabinose is attached to lipid A and is required for resistance to polymyxin and cationic antimicrobial peptides. The polypeptide is Undecaprenyl-phosphate 4-deoxy-4-formamido-L-arabinose transferase (Sodalis glossinidius (strain morsitans)).